Consider the following 90-residue polypeptide: uncharacterized protein (90 aa).

The next 2 helical transmembrane spans lie at 23–43 and 48–68; these read ITTI…VGLF and VTLL…IIGF.

It localises to the cell membrane. This is an uncharacterized protein from Rickettsia prowazekii (strain Madrid E).